Consider the following 311-residue polypeptide: MQAPPPEHCPGVESEDAGKGSACSGCPNQGVCSDPNKKLEDPGKALVVESMKDVKHKLLILSGKGGVGKSTVTSLLARYLARSNPDSNFGVLDIDICGPSQPRLMGALGESVHQSGYGWSPVGIEDNVCLMSIGFLLGSVDDAIIWRGPKKNGMIRQFLSEVDWGNLDLLLLDTPPGTSDEHLSVVSYLKDDTNSESLRAVMVTTPQEVSLLDVRKEINFCKKQNIPIVGVIENMSSFRCGHCGNTSEIFPAKTGGAPAMCAEMGIPLLGSLPLDQQISKACDSGEDLTEFKNVTTEALEGICSKIMASFS.

Residues 1-21 (MQAPPPEHCPGVESEDAGKGS) form a disordered region. 4 residues coordinate [4Fe-4S] cluster: C9, C23, C26, and C32. 63-70 (GKGGVGKS) contacts ATP. Residues C240 and C243 each coordinate [4Fe-4S] cluster.

The protein belongs to the Mrp/NBP35 ATP-binding proteins family. NUBP1/NBP35 subfamily. In terms of assembly, heterotetramer of 2 Nubp1 and 2 Nubp2 chains. [4Fe-4S] cluster is required as a cofactor.

It is found in the cytoplasm. Functionally, component of the cytosolic iron-sulfur (Fe/S) protein assembly (CIA) machinery. Required for maturation of extramitochondrial Fe-S proteins. The Nubp1-Nubp2 heterotetramer forms a Fe-S scaffold complex, mediating the de novo assembly of an Fe-S cluster and its transfer to target apoproteins. This Drosophila sechellia (Fruit fly) protein is Cytosolic Fe-S cluster assembly factor Nubp1 homolog.